The following is a 766-amino-acid chain: BMP/retinoic acid-inducible neural-specific protein 3 (766 aa).

The first 33 residues, 1 to 33, serve as a signal peptide directing secretion; sequence MIWRSRAGAELFSLMALWEWIALSLHCWVLAVA. The MACPF domain maps to 74–264; it reads RYKIYREFGR…FVQAALSYIA (191 aa). Asn168, Asn337, Asn456, Asn562, Asn609, and Asn641 each carry an N-linked (GlcNAc...) asparagine glycan.

It belongs to the BRINP family. In terms of tissue distribution, strongly expressed in oral keratinocytes compared to the weak expression in tongue squamous cell carcinoma (SCC). Expressed in endothelial and aortic smooth muscle cells. Overexpressed in gonadotropinomas compared to normal pituitarie tissues.

The protein localises to the secreted. It is found in the mitochondrion. In terms of biological role, inhibits neuronal cell proliferation by negative regulation of the cell cycle transition. Promotes pituitary gonadotrope cell proliferation, migration and invasion, when overexpressed. May play a role in cell pituitary tumor development. In Homo sapiens (Human), this protein is BMP/retinoic acid-inducible neural-specific protein 3 (BRINP3).